Consider the following 113-residue polypeptide: Hydrogenase maturation factor HypA (113 aa).

His-2 serves as a coordination point for Ni(2+). Zn(2+) contacts are provided by Cys-73, Cys-76, Cys-89, and Cys-92.

This sequence belongs to the HypA/HybF family.

Its function is as follows. Involved in the maturation of [NiFe] hydrogenases. Required for nickel insertion into the metal center of the hydrogenase. The sequence is that of Hydrogenase maturation factor HypA from Chlorobaculum tepidum (strain ATCC 49652 / DSM 12025 / NBRC 103806 / TLS) (Chlorobium tepidum).